The sequence spans 195 residues: Inner membrane protein YohC (195 aa).

The Cytoplasmic portion of the chain corresponds to 1–32 (MSHVWGLFSHPDREMQVINRENETISHHYTHH). The helical transmembrane segment at 33–55 (VLLMAAIPVICAFIGTTQIGWNF) threads the bilayer. Residues 56-64 (GDGTILKLS) are Periplasmic-facing. A helical membrane pass occupies residues 65 to 87 (WFTGLALAVLFYGVMLAGVAVMG). Topologically, residues 88–107 (RVIWWMARNYPQRPSLAHCM) are cytoplasmic. The chain crosses the membrane as a helical span at residues 108-130 (VFAGYVATPLFLSGLVALYPLVW). Over 131-134 (LCAL) the chain is Periplasmic. A helical transmembrane segment spans residues 135 to 157 (VGTVALFYTGYLLYLGIPSFLNI). Residues 158–169 (NKEEGLSFSSST) lie on the Cytoplasmic side of the membrane. A helical membrane pass occupies residues 170-192 (LAIGVLVLEVLLALTVILWGYGY). Residues 193 to 195 (RLF) lie on the Periplasmic side of the membrane.

It localises to the cell inner membrane. The protein is Inner membrane protein YohC (yohC) of Escherichia coli O6:H1 (strain CFT073 / ATCC 700928 / UPEC).